Reading from the N-terminus, the 230-residue chain is Response regulator MprA (230 aa).

A Response regulatory domain is found at 4–118 (RILVVDDDRA…ELLARMRALL (115 aa)). At aspartate 48 the chain carries 4-aspartylphosphate. The ompR/PhoB-type DNA-binding region spans 129–227 (SMAMRFSDLT…VRGVGYVLRE (99 aa)).

In terms of processing, phosphorylated and dephosphorylated by MprB.

Its subcellular location is the cytoplasm. Functionally, member of the two-component regulatory system MprB/MprA which contributes to maintaining a balance among several systems involved in stress resistance and is required for establishment and maintenance of persistent infection in the host. Functions as a transcriptional regulator that recognizes a 19-bp nucleotide motif comprizing two loosely conserved 8-bp direct DNA-binding motif repeats separated by a 3-bp spacer region. In Mycobacterium tuberculosis (strain ATCC 25177 / H37Ra), this protein is Response regulator MprA (mprA).